A 100-amino-acid polypeptide reads, in one-letter code: Pancreatic trypsin inhibitor (100 aa).

The signal sequence occupies residues 1 to 21 (MKMSRLCLSVALLVLLGTLAA). Residues 22-35 (STPGCDTSNQAKAQ) constitute a propeptide that is removed on maturation. The BPTI/Kunitz inhibitor domain occupies 40 to 90 (CLEPPYTGPCKARIIRYFYNAKAGLCQTFVYGGCRAKRNNFKSAEDCMRTC). 3 disulfides stabilise this stretch: C40-C90, C49-C73, and C65-C86. Positions 94-100 (IGPWENL) are excised as a propeptide.

The protein localises to the secreted. In terms of biological role, inhibits trypsin, kallikrein, chymotrypsin, and plasmin. This Bos taurus (Bovine) protein is Pancreatic trypsin inhibitor.